We begin with the raw amino-acid sequence, 54 residues long: Ovomucoid (54 aa).

The 51-residue stretch at 4–54 (VDCSDYPKPACRMEYMPLCGSDNKTYGNKCNFCNAVVDSNGTLTLSHFGKC) folds into the Kazal-like domain. 3 cysteine pairs are disulfide-bonded: Cys6-Cys36, Cys14-Cys33, and Cys22-Cys54. An N-linked (GlcNAc...) asparagine glycan is attached at Asn43.

The protein resides in the secreted. The sequence is that of Ovomucoid from Cereopsis novaehollandiae (Cape Barren goose).